The chain runs to 955 residues: Calsyntenin-2 (955 aa).

Positions 1-20 (MLPGRLCWVPLLLALGVGSG) are cleaved as a signal peptide. Topologically, residues 21 to 831 (SGGGGDSRQR…SIQHSSVVPS (811 aa)) are extracellular. Cadherin domains are found at residues 44 to 160 (IETS…APTF) and 161 to 280 (KEPA…MPLF). N-linked (GlcNAc...) asparagine glycans are attached at residues asparagine 56 and asparagine 98. Residues asparagine 342, asparagine 374, asparagine 716, and asparagine 729 are each glycosylated (N-linked (GlcNAc...) asparagine). The chain crosses the membrane as a helical span at residues 832–852 (IATVVIIISVCMLVFVVAMGV). The Cytoplasmic portion of the chain corresponds to 853–955 (YRVRIAHQHF…LEWDDSTLPY (103 aa)). The interval 887-955 (PMEKHEGPGH…LEWDDSTLPY (69 aa)) is disordered. Basic and acidic residues predominate over residues 888-898 (MEKHEGPGHGE). Composition is skewed to acidic residues over residues 899 to 913 (DETE…EEEM) and 920 to 929 (DDSEEEEEEE).

The protein belongs to the calsyntenin family. Proteolytically processed under normal cellular conditions. A primary zeta-cleavage generates a large extracellular (soluble) N-terminal domain (sAlc) and a short C-terminal transmembrane fragment (CTF1). A secondary cleavage catalyzed by gamma-secretase within the transmembrane domain releases the beta-Alc-gamma chain in the extracellular milieu and produces an intracellular fragment (AlcICD). This processing is strongly suppressed in the tripartite complex formed with APBA2 and APP, which seems to prevent the association with PSEN1. As to expression, restricted to the brain.

It localises to the postsynaptic cell membrane. The protein resides in the endoplasmic reticulum membrane. It is found in the golgi apparatus membrane. Its subcellular location is the cell projection. The protein localises to the dendrite. Its function is as follows. Postsynaptic adhesion molecule that binds to presynaptic neurexins to mediate synapse formation, and which is involved in learning and memory. Promotes synapse development by acting as a cell adhesion molecule at the postsynaptic membrane, which associates with neurexin-alpha at the presynaptic membrane. This chain is Calsyntenin-2, found in Homo sapiens (Human).